Reading from the N-terminus, the 728-residue chain is Catalase-peroxidase 2 (728 aa).

A disordered region spans residues 1 to 20; it reads MSNEGKCPFNHGKRNGTTNR. The segment at residues 91 to 214 is a cross-link (tryptophyl-tyrosyl-methioninium (Trp-Tyr) (with M-240)); sequence WHSAGTYRTG…LAAVQMGLIY (124 aa). The Proton acceptor role is filled by His-92. The tryptophyl-tyrosyl-methioninium (Tyr-Met) (with W-91) cross-link spans 214-240; the sequence is YVNPEGPNGNPDPLASARDIRETFARM. Residue His-255 coordinates heme b. Positions 335–355 are disordered; the sequence is AHQWQPKGGAGADSVPDPFEP.

The protein belongs to the peroxidase family. Peroxidase/catalase subfamily. Homodimer or homotetramer. Heme b serves as cofactor. Formation of the three residue Trp-Tyr-Met cross-link is important for the catalase, but not the peroxidase activity of the enzyme.

The catalysed reaction is H2O2 + AH2 = A + 2 H2O. It carries out the reaction 2 H2O2 = O2 + 2 H2O. Its function is as follows. Bifunctional enzyme with both catalase and broad-spectrum peroxidase activity. The sequence is that of Catalase-peroxidase 2 from Burkholderia cenocepacia (strain HI2424).